Here is a 426-residue protein sequence, read N- to C-terminus: Enolase (426 aa).

Glutamine 163 serves as a coordination point for (2R)-2-phosphoglycerate. Residue glutamate 205 is the Proton donor of the active site. 3 residues coordinate Mg(2+): aspartate 242, glutamate 283, and aspartate 310. (2R)-2-phosphoglycerate is bound by residues lysine 335, arginine 364, serine 365, and lysine 386. Residue lysine 335 is the Proton acceptor of the active site.

This sequence belongs to the enolase family. The cofactor is Mg(2+).

Its subcellular location is the cytoplasm. It localises to the secreted. The protein localises to the cell surface. The enzyme catalyses (2R)-2-phosphoglycerate = phosphoenolpyruvate + H2O. It participates in carbohydrate degradation; glycolysis; pyruvate from D-glyceraldehyde 3-phosphate: step 4/5. Catalyzes the reversible conversion of 2-phosphoglycerate (2-PG) into phosphoenolpyruvate (PEP). It is essential for the degradation of carbohydrates via glycolysis. This chain is Enolase, found in Cutibacterium acnes (strain DSM 16379 / KPA171202) (Propionibacterium acnes).